Here is a 268-residue protein sequence, read N- to C-terminus: Esterase GME11355 (268 aa).

Catalysis depends on charge relay system residues Ser-122, Asp-212, and His-240.

The protein belongs to the LovG family.

The protein operates within secondary metabolite biosynthesis. Its function is as follows. Esterase; part of the gene cluster that mediates the biosynthesis of dibenzodioxocinones such as pestalotiollide B, a novel class of inhibitors against cholesterol ester transfer protein (CEPT). The biosynthesis initiates from condensation of acetate and malonate units catalyzed by the non-reducing PKS pks8/GME11356. Pks8/GME11356 lacks a thioesterase (TE) domain, which is important to the cyclizing of the third ring of atrochrysone carboxylic acid, and the esterase GME11355 might play the role of TE and catalyzes the cyclization reaction of the C ring. The lactamase-like protein GME11357 (or other beta-lactamases in Pestalotiopsis microspora) probably hydrolyzes the thioester bond between the ACP of pks8/GME11356 and the intermediate to release atrochrysone carboxylic acid, which is spontaneously dehydrates to form endocrocin anthrone. Endocrocin anthrone is further converted to emodin via the endocrocin intermediate. Emodin is then oxidized by several enzymes such as the Baeyer-Villiger oxidase GME11358, the oxidoreductase GME11367, the short chain dehydrogenase/reductase GME11373, as well as by other oxidoreductases from the cluster, to modify the A and C rings and open the B ring, and finally yield monodictyphenone. The prenyltransferase GME11375 may catalyze the addition reaction between the C5 side chains and the carbon bone of dibenzodioxocinones. The remaining biochemical reactions to the final product dibenzodioxocinones should be methylation catalyzed by methyltransferase GME11366 and reduction and lactonization reaction catalyzed by a series of oxidordeuctases. In Pestalotiopsis microspora, this protein is Esterase GME11355.